The following is a 37-amino-acid chain: Potassium channel toxin alpha-KTx 3.13 (37 aa).

3 disulfides stabilise this stretch: Cys7-Cys27, Cys13-Cys32, and Cys17-Cys34. A Lysine amide modification is found at Lys37.

It belongs to the short scorpion toxin superfamily. Potassium channel inhibitor family. Alpha-KTx 03 subfamily. In terms of tissue distribution, expressed by the venom gland.

Its subcellular location is the secreted. Blocks voltage-gated potassium channels Kv1.1/KCNA1 (IC(50)=203.15 pM), Kv1.2/KCNA2 (IC(50)=8.92 nM) from rat and human Kv1.3 KCNA3/KCNA3 (IC(50)=171 pM) potently. At 2 uM, also blocks Shaker IR and has a moderate effect on rat Kv1.6/KCNA6. The polypeptide is Potassium channel toxin alpha-KTx 3.13 (Mesobuthus eupeus (Lesser Asian scorpion)).